The sequence spans 319 residues: L-lactate dehydrogenase (319 aa).

NAD(+) contacts are provided by residues V11, D32, R37, Y62, and 76–77 (GV). Residues Q79, R85, and 117 to 120 (NPVD) each bind substrate. Residues 115 to 117 (VTN) and S140 each bind NAD(+). 145–148 (DTAR) lines the substrate pocket. Positions 150 and 165 each coordinate beta-D-fructose 1,6-bisphosphate. The Proton acceptor role is filled by H172. Y217 bears the Phosphotyrosine mark. T226 is a substrate binding site.

It belongs to the LDH/MDH superfamily. LDH family. As to quaternary structure, homotetramer.

The protein resides in the cytoplasm. It catalyses the reaction (S)-lactate + NAD(+) = pyruvate + NADH + H(+). It functions in the pathway fermentation; pyruvate fermentation to lactate; (S)-lactate from pyruvate: step 1/1. With respect to regulation, allosterically activated by fructose 1,6-bisphosphate (FBP). In terms of biological role, catalyzes the conversion of lactate to pyruvate. This is L-lactate dehydrogenase from Thermotoga sp. (strain RQ2).